The chain runs to 700 residues: Methionine synthase reductase (700 aa).

Residues 4-147 (FLLLYATQRG…VVEPWIDGLW (144 aa)) enclose the Flavodoxin-like domain. FMN is bound by residues 10 to 14 (TQRGQ) and 93 to 124 (LLGL…QHFY). The interval 168-247 (TLAQASDAPL…SSLSIPAVSP (80 aa)) is hinge. Residues S173 and S190 each carry the phosphoserine modification. An FAD-binding FR-type domain is found at 272–534 (DPIFQVPISK…PRATNSFHLP (263 aa)). Position 292 (K292) interacts with NADP(+). Residues 452-455 (RPYS) and 488-491 (GVCT) contribute to the FAD site. NADP(+)-binding positions include 611–612 (SR), 626–628 (YVQ), and D661. An FAD-binding site is contributed by W699.

As to quaternary structure, forms a multiprotein complex with MMACHC, MMADHC and MTR. FAD serves as cofactor. The cofactor is FMN.

It is found in the cytoplasm. The enzyme catalyses 2 methylcob(III)alamin-[methionine synthase] + 2 S-adenosyl-L-homocysteine + NADP(+) + H(+) = 2 cob(II)alamin-[methionine synthase] + 2 S-adenosyl-L-methionine + NADPH. The catalysed reaction is 2 cob(II)alamin + A + 2 H2O + 2 H(+) = 2 aquacob(III)alamin + AH2. Functionally, key enzyme in methionine and folate homeostasis responsible for the reactivation of methionine synthase (MTR/MS) activity by catalyzing the reductive methylation of MTR-bound cob(II)alamin. Cobalamin (vitamin B12) forms a complex with MTR to serve as an intermediary in methyl transfer reactions that cycles between MTR-bound methylcob(III)alamin and MTR bound-cob(I)alamin forms, and occasional oxidative escape of the cob(I)alamin intermediate during the catalytic cycle leads to the inactive cob(II)alamin species. The processing of cobalamin in the cytosol occurs in a multiprotein complex composed of at least MMACHC, MMADHC, MTRR and MTR which may contribute to shuttle safely and efficiently cobalamin towards MTR in order to produce methionine. Also necessary for the utilization of methyl groups from the folate cycle, thereby affecting transgenerational epigenetic inheritance. Also acts as a molecular chaperone for methionine synthase by stabilizing apoMTR and incorporating methylcob(III)alamin into apoMTR to form the holoenzyme. Also serves as an aquacob(III)alamin reductase by reducing aquacob(III)alamin to cob(II)alamin; this reduction leads to stimulation of the conversion of apoMTR and aquacob(III)alamin to MTR holoenzyme. This Rattus norvegicus (Rat) protein is Methionine synthase reductase (Mtrr).